The chain runs to 318 residues: Beta-ketoacyl-[acyl-carrier-protein] synthase III (318 aa).

Residues cysteine 113 and histidine 245 contribute to the active site. The ACP-binding stretch occupies residues 246–250; sequence QANIR. Asparagine 275 is a catalytic residue.

It belongs to the thiolase-like superfamily. FabH family. As to quaternary structure, homodimer.

The protein resides in the cytoplasm. The enzyme catalyses malonyl-[ACP] + acetyl-CoA + H(+) = 3-oxobutanoyl-[ACP] + CO2 + CoA. It functions in the pathway lipid metabolism; fatty acid biosynthesis. In terms of biological role, catalyzes the condensation reaction of fatty acid synthesis by the addition to an acyl acceptor of two carbons from malonyl-ACP. Catalyzes the first condensation reaction which initiates fatty acid synthesis and may therefore play a role in governing the total rate of fatty acid production. Possesses both acetoacetyl-ACP synthase and acetyl transacylase activities. Its substrate specificity determines the biosynthesis of branched-chain and/or straight-chain of fatty acids. This chain is Beta-ketoacyl-[acyl-carrier-protein] synthase III, found in Wolbachia pipientis wMel.